The primary structure comprises 211 residues: Bifunctional transcriptional activator/DNA repair enzyme AdaA (211 aa).

C54 acts as the Nucleophile; methyl group acceptor from methylphosphotriester in catalysis. Zn(2+) is bound by residues C54, C58, C85, and C88. The HTH araC/xylS-type domain occupies 102 to 200; sequence DLITEYIDKN…GQTPARFRQM (99 aa). The segment at residues 119 to 140 is a DNA-binding region (H-T-H motif); the sequence is ESLADICHGSPYHMHRTFKKIK.

Zn(2+) serves as cofactor.

The enzyme catalyses (2'-deoxyribonucleoside 5'-methylphosphotriester)-DNA + L-cysteinyl-[protein] = 2'-deoxyribonucleotide-DNA + S-methyl-L-cysteinyl-[protein] + H(+). Functionally, is involved in the adaptive response to alkylation damage in DNA caused by alkylating agents. Repairs the methylphosphotriester lesions in DNA by a direct and irreversible transfer of the methyl group to one of its own cysteine residues. Its function is as follows. The methylation of AdaA by methylphosphotriesters in DNA leads to its activation as a transcriptional regulator that activates the transcription of the ada operon which consists of adaA and adaB, and of the adjacent gene alkA. In Bacillus subtilis (strain 168), this protein is Bifunctional transcriptional activator/DNA repair enzyme AdaA (adaA).